A 181-amino-acid chain; its full sequence is Protein Syd (181 aa).

This sequence belongs to the Syd family.

The protein resides in the cell inner membrane. Interacts with the SecY protein in vivo. May bind preferentially to an uncomplexed state of SecY, thus functioning either as a chelating agent for excess SecY in the cell or as a regulatory factor that negatively controls the translocase function. The polypeptide is Protein Syd (Enterobacter sp. (strain 638)).